A 414-amino-acid polypeptide reads, in one-letter code: Esterase FrsA (414 aa).

This sequence belongs to the FrsA family.

It catalyses the reaction a carboxylic ester + H2O = an alcohol + a carboxylate + H(+). Catalyzes the hydrolysis of esters. This Escherichia coli O45:K1 (strain S88 / ExPEC) protein is Esterase FrsA.